The chain runs to 875 residues: MATERYNPRASEPKWQKAWAEKKLFEARNDDPKPKYYVLEMFPYPSGRIHIGHTRNYTMGDVVARYKRAKGFNVLHPMGWDAFGMPAENAAMQNKVHPKEWTYQNIATMREQLKVMGLSLDWAREFATCDVDYYHRQQMLFLDFVEKGLVTRKSSKVNWDPEDMTVLANEQVIDGRGWRSGALVEQRELTQWFFKITDFAQDLLDSLEGLDEWPEKVKLMQQNWIGRSEGLLIRWPLASDVAGEHELEVYTTRPDTIFGASFMAVAADHPLAKKAAETNPALAKFIDEVRHMGTSVAALETAEKKGFDTGIRVVHPFDDSWTLPVYVANFVLMEYGTGAIFGCPSGDQRDLDFANKYGLPVIPVVMPEGGDAKSFQITEEAYVDDGVMINSRFLDGMKPDRAFDEVAKLLEQKTIGNRPMAERKVNFRLRDWGISRQRYWGCPIPMIHCEDCGVVPVPKADLPVKLPDDVDFDRPGNPLDRHPTWRHVKCPQCGRDARRETDTMDTFVDSSWYFARFTAPWAYEPTDPRAANEWLPVDQYIGGIEHAILHLLYSRFFTRAMRATGHVDLAEPFKGLFTQGMVVHETYRVGGASNNGRWLSPAEVRIEDAEGKRRAIEIATGEEAAIGSLEKMSKSKKNTVSPEDITDGYGADTARWLMLSDSPPEGDVEWTDDGAAGAHRFMQRIWRLVSTAAETLAGVKPAAADSGEAGAVRKATHKILKAVGEDIEKLGFNRAIARIYELANVLTTPLNQVAEGKADPALQGACREAVEILVHLIAPVMPHLAEECWETLGGTDLVAERPWPAFDPALVVDNEVTYPVQVNGKKRGDLTIARDADQGAVEKAVLALDFVQKALEGKAPRKVIIVPQRIVNVVA.

The 'HIGH' region signature appears at 43 to 53; the sequence is PYPSGRIHIGH. A 'KMSKS' region motif is present at residues 631 to 635; that stretch reads KMSKS. ATP is bound at residue Lys634.

Belongs to the class-I aminoacyl-tRNA synthetase family.

The protein resides in the cytoplasm. The catalysed reaction is tRNA(Leu) + L-leucine + ATP = L-leucyl-tRNA(Leu) + AMP + diphosphate. This Mesorhizobium japonicum (strain LMG 29417 / CECT 9101 / MAFF 303099) (Mesorhizobium loti (strain MAFF 303099)) protein is Leucine--tRNA ligase.